A 555-amino-acid polypeptide reads, in one-letter code: Beta-hexosaminidase A (555 aa).

The first 18 residues, 1-18 (MRLLIPILIFALITTAVT), serve as a signal peptide directing secretion. N-linked (GlcNAc...) asparagine glycosylation occurs at N47. The active-site Proton donor is E325. N-linked (GlcNAc...) asparagine glycans are attached at residues N351, N412, and N460.

This sequence belongs to the glycosyl hydrolase 20 family. In terms of tissue distribution, expressed in coelomocytes and neurons of the pharyngeal region and nerve cord.

The protein localises to the lysosome. It catalyses the reaction Hydrolysis of terminal non-reducing N-acetyl-D-hexosamine residues in N-acetyl-beta-D-hexosaminides.. Its function is as follows. Responsible for the degradation of GM2 gangliosides, and a variety of other molecules containing terminal N-acetyl hexosamines. Degrades chitotriose. This chain is Beta-hexosaminidase A (hex-1), found in Caenorhabditis elegans.